A 344-amino-acid chain; its full sequence is Anthranilate phosphoribosyltransferase (344 aa).

Residues glycine 80, 83–84, threonine 88, 90–93, 108–116, and serine 120 contribute to the 5-phospho-alpha-D-ribose 1-diphosphate site; these read GD, NVST, and KHGNRSVSS. Glycine 80 is a binding site for anthranilate. Serine 92 is a Mg(2+) binding site. An anthranilate-binding site is contributed by asparagine 111. Residue arginine 166 coordinates anthranilate. The Mg(2+) site is built by aspartate 225 and glutamate 226.

It belongs to the anthranilate phosphoribosyltransferase family. As to quaternary structure, homodimer. It depends on Mg(2+) as a cofactor.

The enzyme catalyses N-(5-phospho-beta-D-ribosyl)anthranilate + diphosphate = 5-phospho-alpha-D-ribose 1-diphosphate + anthranilate. It functions in the pathway amino-acid biosynthesis; L-tryptophan biosynthesis; L-tryptophan from chorismate: step 2/5. Catalyzes the transfer of the phosphoribosyl group of 5-phosphorylribose-1-pyrophosphate (PRPP) to anthranilate to yield N-(5'-phosphoribosyl)-anthranilate (PRA). The chain is Anthranilate phosphoribosyltransferase from Legionella pneumophila (strain Corby).